Consider the following 778-residue polypeptide: Aerobic respiration control sensor protein ArcB (778 aa).

The Cytoplasmic segment spans residues Met-1–Met-25. A helical membrane pass occupies residues Leu-26–Leu-46. Topologically, residues His-47–Arg-57 are periplasmic. Residues Ser-58 to Glu-78 form a helical membrane-spanning segment. At Gln-79–Lys-778 the chain is on the cytoplasmic side. The region spanning Gln-153–Asn-223 is the PAS domain. A PAC domain is found at Leu-226–Arg-278. Residues Thr-289–Ser-507 enclose the Histidine kinase domain. A Phosphohistidine; by autocatalysis modification is found at His-292. The Response regulatory domain maps to Asn-527–Trp-643. A 4-aspartylphosphate modification is found at Asp-576. An HPt domain is found at Gly-678–Trp-771. A Phosphohistidine modification is found at His-717.

Post-translationally, activation requires a sequential transfer of a phosphate group from a His in the primary transmitter domain, to an Asp in the receiver domain and to a His in the secondary transmitter domain.

The protein resides in the cell inner membrane. The catalysed reaction is ATP + protein L-histidine = ADP + protein N-phospho-L-histidine.. In terms of biological role, member of the two-component regulatory system ArcB/ArcA. Sensor-regulator protein for anaerobic repression of the arc modulon. Activates ArcA via a four-step phosphorelay. ArcB can also dephosphorylate ArcA by a reverse phosphorelay involving His-717 and Asp-576. This is Aerobic respiration control sensor protein ArcB (arcB) from Escherichia coli O157:H7.